We begin with the raw amino-acid sequence, 392 residues long: DNA replication and repair protein RecF (392 aa).

Position 33-40 (33-40 (GANGAGKT)) interacts with ATP.

It belongs to the RecF family.

It is found in the cytoplasm. In terms of biological role, the RecF protein is involved in DNA metabolism; it is required for DNA replication and normal SOS inducibility. RecF binds preferentially to single-stranded, linear DNA. It also seems to bind ATP. This Caulobacter sp. (strain K31) protein is DNA replication and repair protein RecF.